The chain runs to 333 residues: Meiotic drive suppressor wtf9 (333 aa).

The disordered stretch occupies residues Met1–Asn69. Residues Lys19–Pro30 show a composition bias toward basic and acidic residues. Helical transmembrane passes span Leu73–Leu95, Val108–Phe130, Trp174–Leu191, and Leu204–Phe226.

This sequence belongs to the WTF family. In terms of assembly, homomer. Interacts with other proteins that exhibit high sequence similarity.

The protein resides in the spore membrane. It is found in the vacuole membrane. In terms of biological role, acts as a suppressor component of the dual wtf meiotic drive system, and can suppress but not confer meiotic drive by compatible poisons. Wtf meiotic drive systems promote unequal transmission of alleles from the parental zygote to progeny spores by encoding a poison and an antidote from the same locus; the poison is trans-acting and forms toxic aggregates in all spores within an ascus, wherease the antidote is spore-specific and targets aggregates for degradation by the vacuole. Meiotic drive by wtf systems therefore lead to poisoning of all progeny that do not inherit the dual poison/antidote allele, or express a compatible antidote. This Schizosaccharomyces pombe (strain 972 / ATCC 24843) (Fission yeast) protein is Meiotic drive suppressor wtf9.